Consider the following 203-residue polypeptide: E3 ubiquitin-protein ligase RNF152 (203 aa).

Residues 12–55 form an RING-type zinc finger; it reads CQICFNYYSPRRRPKLLDCKHTCCSVCLQQMRTSQKDVRCPWCR. Residues 106 to 165 form a necessary for interaction with RRAGA region; the sequence is ISKERALLPGDMGCRLLPGSQQKSVTVVTVPAEQRPLQGGAPQEAVEEEPDRRGVAKSST. Residues 167–187 traverse the membrane as a helical segment; that stretch reads SGVCTVILVACVLVFLLGIVL.

It belongs to the RNF152 family. Interacts with RRAGA (inactive GDP-bound form); stimulated by amino acid starvation. In terms of processing, ubiquitinated. Autoubiquitinated in vitro, leading to its degradation by the proteasome.

The protein resides in the lysosome membrane. The catalysed reaction is S-ubiquitinyl-[E2 ubiquitin-conjugating enzyme]-L-cysteine + [acceptor protein]-L-lysine = [E2 ubiquitin-conjugating enzyme]-L-cysteine + N(6)-ubiquitinyl-[acceptor protein]-L-lysine.. It participates in protein modification; protein ubiquitination. Its function is as follows. E3 ubiquitin-protein ligase that acts as a negative regulator of mTORC1 signaling by mediating ubiquitination of RagA/RRAGA and RHEB. Catalyzes 'Lys-63'-linked polyubiquitination of RagA/RRAGA in response to amino acid starvation, thereby regulating mTORC1 signaling. Also mediates monoubiquitination of RHEB, promoting its association with the TSC-TBC complex and subsequent inhibition. Also mediates 'Lys-48'-linked polyubiquitination of target proteins and their subsequent targeting to the proteasome for degradation. Induces apoptosis when overexpressed. This is E3 ubiquitin-protein ligase RNF152 from Ailuropoda melanoleuca (Giant panda).